The sequence spans 172 residues: Capsid protein (172 aa).

Residues 1-26 form a disordered region; sequence MASKWNWSGTKGRRTPRRPYGRPYKS. The span at 11-20 shows a compositional bias: basic residues; it reads KGRRTPRRPY.

It belongs to the nanoviridae capsid protein family.

It is found in the virion. This chain is Capsid protein (DNA-S), found in Faba bean necrotic yellows virus (isolate Syrian SV292-88) (FBNYV).